A 24-amino-acid polypeptide reads, in one-letter code: Humanin-like 10 (24 aa).

It belongs to the humanin family. As to expression, expressed in mature brain, thyroid gland and testis.

The protein localises to the secreted. Its subcellular location is the cytoplasm. Its function is as follows. Plays a role as a neuroprotective and antiapoptotic factor. The protein is Humanin-like 10 of Homo sapiens (Human).